The following is a 670-amino-acid chain: DNA ligase (670 aa).

Residues 32 to 36 (DAYYD), 81 to 82 (SL), and E110 each bind NAD(+). Catalysis depends on K112, which acts as the N6-AMP-lysine intermediate. Residues R133, E170, K289, and K313 each contribute to the NAD(+) site. Zn(2+) is bound by residues C407, C410, C425, and C431. In terms of domain architecture, BRCT spans 590–670 (EDELRLKGQT…ELLVFLGLAG (81 aa)).

Belongs to the NAD-dependent DNA ligase family. LigA subfamily. It depends on Mg(2+) as a cofactor. Mn(2+) serves as cofactor.

It catalyses the reaction NAD(+) + (deoxyribonucleotide)n-3'-hydroxyl + 5'-phospho-(deoxyribonucleotide)m = (deoxyribonucleotide)n+m + AMP + beta-nicotinamide D-nucleotide.. In terms of biological role, DNA ligase that catalyzes the formation of phosphodiester linkages between 5'-phosphoryl and 3'-hydroxyl groups in double-stranded DNA using NAD as a coenzyme and as the energy source for the reaction. It is essential for DNA replication and repair of damaged DNA. This Shewanella denitrificans (strain OS217 / ATCC BAA-1090 / DSM 15013) protein is DNA ligase.